Reading from the N-terminus, the 424-residue chain is Enolase (424 aa).

Position 165 (Gln165) interacts with (2R)-2-phosphoglycerate. Glu207 functions as the Proton donor in the catalytic mechanism. The Mg(2+) site is built by Asp244, Glu283, and Asp310. (2R)-2-phosphoglycerate contacts are provided by Lys335, Arg364, Ser365, and Lys386. The active-site Proton acceptor is Lys335.

The protein belongs to the enolase family. The cofactor is Mg(2+).

The protein localises to the cytoplasm. It is found in the secreted. Its subcellular location is the cell surface. It catalyses the reaction (2R)-2-phosphoglycerate = phosphoenolpyruvate + H2O. It participates in carbohydrate degradation; glycolysis; pyruvate from D-glyceraldehyde 3-phosphate: step 4/5. Its function is as follows. Catalyzes the reversible conversion of 2-phosphoglycerate (2-PG) into phosphoenolpyruvate (PEP). It is essential for the degradation of carbohydrates via glycolysis. The chain is Enolase from Chlamydia caviae (strain ATCC VR-813 / DSM 19441 / 03DC25 / GPIC) (Chlamydophila caviae).